The chain runs to 461 residues: Bifunctional protein GlmU (461 aa).

The segment at 1–229 is pyrophosphorylase; the sequence is MLKKEINVVI…CKEILGVNNK (229 aa). Residues 11–14, K25, Q76, 81–82, 103–105, G140, E154, and N227 each bind UDP-N-acetyl-alpha-D-glucosamine; these read LAAG, GT, and YGD. D105 is a binding site for Mg(2+). N227 contacts Mg(2+). The linker stretch occupies residues 230–250; it reads LQLSILEKIFRKKQVNDLLLS. Residues 251 to 461 form an N-acetyltransferase region; sequence GVTLKDPNHF…PQKIIKKTDQ (211 aa). UDP-N-acetyl-alpha-D-glucosamine contacts are provided by R333 and K351. The active-site Proton acceptor is H363. UDP-N-acetyl-alpha-D-glucosamine contacts are provided by Y366 and N377. Acetyl-CoA is bound by residues A380, 386 to 387, and A423; that span reads NY.

The protein in the N-terminal section; belongs to the N-acetylglucosamine-1-phosphate uridyltransferase family. In the C-terminal section; belongs to the transferase hexapeptide repeat family. Homotrimer. Requires Mg(2+) as cofactor.

It localises to the cytoplasm. It carries out the reaction alpha-D-glucosamine 1-phosphate + acetyl-CoA = N-acetyl-alpha-D-glucosamine 1-phosphate + CoA + H(+). It catalyses the reaction N-acetyl-alpha-D-glucosamine 1-phosphate + UTP + H(+) = UDP-N-acetyl-alpha-D-glucosamine + diphosphate. Its pathway is nucleotide-sugar biosynthesis; UDP-N-acetyl-alpha-D-glucosamine biosynthesis; N-acetyl-alpha-D-glucosamine 1-phosphate from alpha-D-glucosamine 6-phosphate (route II): step 2/2. It participates in nucleotide-sugar biosynthesis; UDP-N-acetyl-alpha-D-glucosamine biosynthesis; UDP-N-acetyl-alpha-D-glucosamine from N-acetyl-alpha-D-glucosamine 1-phosphate: step 1/1. It functions in the pathway bacterial outer membrane biogenesis; LPS lipid A biosynthesis. Its function is as follows. Catalyzes the last two sequential reactions in the de novo biosynthetic pathway for UDP-N-acetylglucosamine (UDP-GlcNAc). The C-terminal domain catalyzes the transfer of acetyl group from acetyl coenzyme A to glucosamine-1-phosphate (GlcN-1-P) to produce N-acetylglucosamine-1-phosphate (GlcNAc-1-P), which is converted into UDP-GlcNAc by the transfer of uridine 5-monophosphate (from uridine 5-triphosphate), a reaction catalyzed by the N-terminal domain. The protein is Bifunctional protein GlmU of Buchnera aphidicola subsp. Schizaphis graminum (strain Sg).